We begin with the raw amino-acid sequence, 1458 residues long: DNA polymerase alpha catalytic subunit (1458 aa).

2 disordered regions span residues 1 to 25 (MSDS…RKEA) and 89 to 119 (DLED…SVSK). The segment covering 15–25 (EKTEKSGRKEA) has biased composition (basic and acidic residues). 2 DNA-binding regions span residues 650 to 715 (RINS…VHQI) and 1241 to 1373 (QFRA…ACSK). Residues C1280, C1283, C1307, C1312, C1345, C1350, C1368, and C1371 each contribute to the Zn(2+) site. The segment at 1280–1310 (CPKCGTENIYDNVFDGSGLQIEPGLKRCSKP) adopts a CysA-type zinc-finger fold. Positions 1345-1371 (CEEKTCQNRTRRLPLSFSRNGPICQAC) match the CysB motif motif.

The protein belongs to the DNA polymerase type-B family. In terms of assembly, the DNA polymerase alpha complex is composed of four subunits: the catalytic subunit POLA1, the regulatory subunit POLA2, and the small and the large primase subunits PRIM1 and PRIM2 respectively. Interacts with PARP1; this interaction functions as part of the control of replication fork progression. Interacts with MCM10 and WDHD1; these interactions recruit the polymerase alpha complex to the pre-replicative complex bound to DNA. Interacts with RPA1; this interaction stabilizes the replicative complex and reduces the misincorporation rate of DNA polymerase alpha by acting as a fidelity clamp.

Its subcellular location is the nucleus. The enzyme catalyses DNA(n) + a 2'-deoxyribonucleoside 5'-triphosphate = DNA(n+1) + diphosphate. Plays an essential role in the initiation of DNA replication. During the S phase of the cell cycle, the DNA polymerase alpha complex (composed of a catalytic subunit POLA1/p180, a regulatory subunit POLA2/p70 and two primase subunits PRIM1/p49 and PRIM2/p58) is recruited to DNA at the replicative forks via direct interactions with MCM10 and WDHD1. The primase subunit of the polymerase alpha complex initiates DNA synthesis by oligomerising short RNA primers on both leading and lagging strands. These primers are initially extended by the polymerase alpha catalytic subunit and subsequently transferred to polymerase delta and polymerase epsilon for processive synthesis on the lagging and leading strand, respectively. The reason this transfer occurs is because the polymerase alpha has limited processivity and lacks intrinsic 3' exonuclease activity for proofreading error, and therefore is not well suited for replicating long complexes. This Xenopus laevis (African clawed frog) protein is DNA polymerase alpha catalytic subunit (pola1).